We begin with the raw amino-acid sequence, 276 residues long: MGKLKLLNTIAPAYFYAATVVTFALHFLLFTPTIFQSSDVTINPAMLAHISIFLFLMGNALGNYIMTIRNPSESANETVIPVCSPDCPDRIDAHYLLNGRHFCKVCKKVILKRDHHCFFTGNCIGNRNMRYFIMFSIYTSSSCLYSLVIGVAYLTIEYSISFENPLTFLTLLPLSTGYFFLGLISGLQFFLVIMLYIWLGIGLVSVGFCCQQLLLVARGQTWCELQKGQLSECRGTWRANLTDVFGSHWVLGLFVPVPTVETVPGNWQVYHDHKHD.

The Cytoplasmic segment spans residues 1 to 9; that stretch reads MGKLKLLNT. Residues 10–30 form a helical membrane-spanning segment; it reads IAPAYFYAATVVTFALHFLLF. Residues 31–45 are Lumenal-facing; the sequence is TPTIFQSSDVTINPA. A helical membrane pass occupies residues 46–66; sequence MLAHISIFLFLMGNALGNYIM. The Cytoplasmic segment spans residues 67–131; it reads TIRNPSESAN…NCIGNRNMRY (65 aa). One can recognise a DHHC domain in the interval 101 to 137; sequence HFCKVCKKVILKRDHHCFFTGNCIGNRNMRYFIMFSI. The active-site S-palmitoyl cysteine intermediate is the C117. The chain crosses the membrane as a helical span at residues 132–152; sequence FIMFSIYTSSSCLYSLVIGVA. Residues 153–165 are Lumenal-facing; it reads YLTIEYSISFENP. A helical transmembrane segment spans residues 166–186; sequence LTFLTLLPLSTGYFFLGLISG. Residues 187-188 are Cytoplasmic-facing; it reads LQ. Residues 189 to 209 form a helical membrane-spanning segment; that stretch reads FFLVIMLYIWLGIGLVSVGFC. Topologically, residues 210–276 are lumenal; the sequence is CQQLLLVARG…WQVYHDHKHD (67 aa).

The protein belongs to the DHHC palmitoyltransferase family.

The protein resides in the endoplasmic reticulum membrane. Its subcellular location is the golgi apparatus membrane. It catalyses the reaction L-cysteinyl-[protein] + hexadecanoyl-CoA = S-hexadecanoyl-L-cysteinyl-[protein] + CoA. In terms of biological role, palmitoyltransferase that could catalyze the addition of palmitate onto various protein substrates and be involved in a variety of cellular processes. This is Palmitoyltransferase ZDHHC22 (zdhhc22) from Danio rerio (Zebrafish).